Here is a 169-residue protein sequence, read N- to C-terminus: NAD(P)H-quinone oxidoreductase subunit J, chloroplastic (169 aa).

It belongs to the complex I 30 kDa subunit family. In terms of assembly, NDH is composed of at least 16 different subunits, 5 of which are encoded in the nucleus.

Its subcellular location is the plastid. It is found in the chloroplast thylakoid membrane. The catalysed reaction is a plastoquinone + NADH + (n+1) H(+)(in) = a plastoquinol + NAD(+) + n H(+)(out). It carries out the reaction a plastoquinone + NADPH + (n+1) H(+)(in) = a plastoquinol + NADP(+) + n H(+)(out). NDH shuttles electrons from NAD(P)H:plastoquinone, via FMN and iron-sulfur (Fe-S) centers, to quinones in the photosynthetic chain and possibly in a chloroplast respiratory chain. The immediate electron acceptor for the enzyme in this species is believed to be plastoquinone. Couples the redox reaction to proton translocation, and thus conserves the redox energy in a proton gradient. This Staurastrum punctulatum (Green alga) protein is NAD(P)H-quinone oxidoreductase subunit J, chloroplastic.